Consider the following 243-residue polypeptide: MSDMAMIRIGILIAGLLLVAAIFLFGRPKKSPQGRRVDKDEGQPRERREPVISSEFGVEDDAAERAEGVEQSELNLEGQDASGGNEVGKRPNQDFDKIVSLFVAAKAGQVLRGEDVVVAAEKTGLVFGHMNVFHRLVEGHPERGPIFSMASILKPGSFDMANIREMQTPAIAFFLTLPAPMTALDAWEKMLPTVQRMAELLDGVVLDDSRNALGRQRVAHIRDELRAYDRQHQAPPLTKSPRW.

At 1-4 (MSDM) the chain is on the periplasmic side. Residues 5–25 (AMIRIGILIAGLLLVAAIFLF) traverse the membrane as a helical segment. At 26–243 (GRPKKSPQGR…APPLTKSPRW (218 aa)) the chain is on the cytoplasmic side. The tract at residues 30–89 (KSPQGRRVDKDEGQPRERREPVISSEFGVEDDAAERAEGVEQSELNLEGQDASGGNEVGK) is disordered. Residues 35-50 (RRVDKDEGQPRERREP) show a composition bias toward basic and acidic residues.

It belongs to the ZipA family. Interacts with FtsZ via their C-terminal domains.

Its subcellular location is the cell inner membrane. In terms of biological role, essential cell division protein that stabilizes the FtsZ protofilaments by cross-linking them and that serves as a cytoplasmic membrane anchor for the Z ring. Also required for the recruitment to the septal ring of downstream cell division proteins. This Xanthomonas euvesicatoria pv. vesicatoria (strain 85-10) (Xanthomonas campestris pv. vesicatoria) protein is Cell division protein ZipA.